The following is a 252-amino-acid chain: 2-succinyl-6-hydroxy-2,4-cyclohexadiene-1-carboxylate synthase (252 aa).

This sequence belongs to the AB hydrolase superfamily. MenH family. Monomer.

The enzyme catalyses 5-enolpyruvoyl-6-hydroxy-2-succinyl-cyclohex-3-ene-1-carboxylate = (1R,6R)-6-hydroxy-2-succinyl-cyclohexa-2,4-diene-1-carboxylate + pyruvate. It participates in quinol/quinone metabolism; 1,4-dihydroxy-2-naphthoate biosynthesis; 1,4-dihydroxy-2-naphthoate from chorismate: step 3/7. The protein operates within quinol/quinone metabolism; menaquinone biosynthesis. In terms of biological role, catalyzes a proton abstraction reaction that results in 2,5-elimination of pyruvate from 2-succinyl-5-enolpyruvyl-6-hydroxy-3-cyclohexene-1-carboxylate (SEPHCHC) and the formation of 2-succinyl-6-hydroxy-2,4-cyclohexadiene-1-carboxylate (SHCHC). The sequence is that of 2-succinyl-6-hydroxy-2,4-cyclohexadiene-1-carboxylate synthase from Salmonella enteritidis PT4 (strain P125109).